Consider the following 442-residue polypeptide: Microfibrillar-associated protein 1 (442 aa).

2 disordered regions span residues 1–34 (MSAP…YGEG) and 113–203 (EVVS…PRLK). Composition is skewed to acidic residues over residues 134–148 (DTSE…DEEI) and 181–198 (ESEL…EDEM).

This sequence belongs to the MFAP1 family. As to quaternary structure, component of the spliceosome B complex. Interacts with PRPF38A (via N-terminal interaction domain). Widely expressed.

The protein resides in the nucleus. In terms of biological role, involved in pre-mRNA splicing as a component of the spliceosome. The chain is Microfibrillar-associated protein 1 from Gallus gallus (Chicken).